A 204-amino-acid chain; its full sequence is Holliday junction branch migration complex subunit RuvA (204 aa).

The segment at 1-64 (MIGRLCGTAE…EDAITLFGFI (64 aa)) is domain I. Positions 65–143 (DAAERDWFRL…AMPTGSAFIP (79 aa)) are domain II. The interval 144 to 154 (TGTAPPVAPPQ) is flexible linker. The segment at 154–204 (QGKLADALSALVNLGYRRAEAEAALSAVQAEAGEDAALDELIRGGLRRLAR) is domain III.

It belongs to the RuvA family. In terms of assembly, homotetramer. Forms an RuvA(8)-RuvB(12)-Holliday junction (HJ) complex. HJ DNA is sandwiched between 2 RuvA tetramers; dsDNA enters through RuvA and exits via RuvB. An RuvB hexamer assembles on each DNA strand where it exits the tetramer. Each RuvB hexamer is contacted by two RuvA subunits (via domain III) on 2 adjacent RuvB subunits; this complex drives branch migration. In the full resolvosome a probable DNA-RuvA(4)-RuvB(12)-RuvC(2) complex forms which resolves the HJ.

The protein resides in the cytoplasm. In terms of biological role, the RuvA-RuvB-RuvC complex processes Holliday junction (HJ) DNA during genetic recombination and DNA repair, while the RuvA-RuvB complex plays an important role in the rescue of blocked DNA replication forks via replication fork reversal (RFR). RuvA specifically binds to HJ cruciform DNA, conferring on it an open structure. The RuvB hexamer acts as an ATP-dependent pump, pulling dsDNA into and through the RuvAB complex. HJ branch migration allows RuvC to scan DNA until it finds its consensus sequence, where it cleaves and resolves the cruciform DNA. The polypeptide is Holliday junction branch migration complex subunit RuvA (Acidiphilium cryptum (strain JF-5)).